Consider the following 695-residue polypeptide: Lysophospholipase 2 (695 aa).

The N-terminal stretch at 1–19 is a signal peptide; the sequence is MQLSVLIASVLAAGAAVDA. 20 N-linked (GlcNAc...) asparagine glycosylation sites follow: Asn-26, Asn-72, Asn-83, Asn-115, Asn-152, Asn-171, Asn-207, Asn-269, Asn-335, Asn-379, Asn-480, Asn-504, Asn-513, Asn-532, Asn-556, Asn-573, Asn-620, Asn-626, Asn-644, and Asn-648. A PLA2c domain is found at 28-577; sequence SCPDNANFIR…TNYCWNGTID (550 aa). The segment at 612-662 is disordered; sequence NTGSGTKSNSSSKTNSTLVTSSRATSTGTLISNSSSNSTVSSTAARSSTSS.

It belongs to the lysophospholipase family.

It is found in the secreted. Its subcellular location is the cell wall. The enzyme catalyses a 1-acyl-sn-glycero-3-phosphocholine + H2O = sn-glycerol 3-phosphocholine + a fatty acid + H(+). Functionally, catalyzes the release of fatty acids from lysophospholipids. Phospholipase B may well contribute to pathogenicity by abetting the fungus in damaging and traversing host cell membranes, processes which likely increase the rapidity of disseminated infection. The polypeptide is Lysophospholipase 2 (Candida glabrata (strain ATCC 2001 / BCRC 20586 / JCM 3761 / NBRC 0622 / NRRL Y-65 / CBS 138) (Yeast)).